The chain runs to 943 residues: Coiled-coil and C2 domain-containing protein 1A (943 aa).

Phosphothreonine is present on threonine 91. Disordered regions lie at residues asparagine 186–leucine 250 and aspartate 300–proline 337. Low complexity-rich tracts occupy residues alanine 195–histidine 206 and alanine 229–alanine 238. Serine 248 bears the Phosphoserine mark. The segment covering leucine 304–alanine 319 has biased composition (pro residues). Residues arginine 339–histidine 385 are a coiled coil. Residues asparagine 430–alanine 483 are disordered. Serine 435 is subject to Phosphoserine. Polar residues predominate over residues lysine 445–leucine 456. Over residues alanine 469 to glycine 478 the composition is skewed to low complexity. A coiled-coil region spans residues lysine 477–valine 510. The C2 domain maps to arginine 630–leucine 764.

It belongs to the CC2D1 family. As to expression, highly expressed in brain, expression is enriched in the gray matter and strongest in the olfactory bulb.

The protein localises to the cytoplasm. The protein resides in the nucleus. It localises to the cytoskeleton. Its subcellular location is the microtubule organizing center. It is found in the centrosome. Transcription factor that binds specifically to the DRE (dual repressor element) and represses HTR1A gene transcription in neuronal cells. The combination of calcium and ATP specifically inactivates the binding with FRE. May play a role in the altered regulation of HTR1A associated with anxiety and major depression. Mediates HDAC-independent repression of HTR1A promoter in neuronal cell. Performs essential function in controlling functional maturation of synapses. The chain is Coiled-coil and C2 domain-containing protein 1A (Cc2d1a) from Mus musculus (Mouse).